The following is a 481-amino-acid chain: Chromosomal replication initiator protein DnaA (481 aa).

The interval 1–71 (MTDLSAFWPQ…ETFAEDILGR (71 aa)) is domain I, interacts with DnaA modulators. Residues 71-143 (RPVTIELRIG…PAIGGGHEST (73 aa)) form a domain II region. Low complexity predominate over residues 86–96 (ASAPAAASPRS). Residues 86–110 (ASAPAAASPRSPGRPAPAPVAATPT) form a disordered region. Residues 144-361 (RLNPAFTFES…GALKRVVAYS (218 aa)) form a domain III, AAA+ region region. Residues Gly-189, Gly-191, Lys-192, and Thr-193 each contribute to the ATP site. The tract at residues 362–481 (RFSNQPISLD…YAALQQMLRN (120 aa)) is domain IV, binds dsDNA.

Belongs to the DnaA family. As to quaternary structure, oligomerizes as a right-handed, spiral filament on DNA at oriC.

It is found in the cytoplasm. Functionally, plays an essential role in the initiation and regulation of chromosomal replication. ATP-DnaA binds to the origin of replication (oriC) to initiate formation of the DNA replication initiation complex once per cell cycle. Binds the DnaA box (a 9 base pair repeat at the origin) and separates the double-stranded (ds)DNA. Forms a right-handed helical filament on oriC DNA; dsDNA binds to the exterior of the filament while single-stranded (ss)DNA is stabiized in the filament's interior. The ATP-DnaA-oriC complex binds and stabilizes one strand of the AT-rich DNA unwinding element (DUE), permitting loading of DNA polymerase. After initiation quickly degrades to an ADP-DnaA complex that is not apt for DNA replication. Binds acidic phospholipids. The protein is Chromosomal replication initiator protein DnaA of Laribacter hongkongensis (strain HLHK9).